A 187-amino-acid chain; its full sequence is Elongation factor P (187 aa).

The protein belongs to the elongation factor P family.

Its subcellular location is the cytoplasm. It functions in the pathway protein biosynthesis; polypeptide chain elongation. In terms of biological role, involved in peptide bond synthesis. Stimulates efficient translation and peptide-bond synthesis on native or reconstituted 70S ribosomes in vitro. Probably functions indirectly by altering the affinity of the ribosome for aminoacyl-tRNA, thus increasing their reactivity as acceptors for peptidyl transferase. This Corynebacterium aurimucosum (strain ATCC 700975 / DSM 44827 / CIP 107346 / CN-1) (Corynebacterium nigricans) protein is Elongation factor P.